Consider the following 146-residue polypeptide: Anti-sigma F factor (146 aa).

This sequence belongs to the anti-sigma-factor family.

It catalyses the reaction L-seryl-[protein] + ATP = O-phospho-L-seryl-[protein] + ADP + H(+). The catalysed reaction is L-threonyl-[protein] + ATP = O-phospho-L-threonyl-[protein] + ADP + H(+). In terms of biological role, binds to sigma F and blocks its ability to form an RNA polymerase holoenzyme (E-sigma F). Phosphorylates SpoIIAA on a serine residue. This phosphorylation may enable SpoIIAA to act as an anti-anti-sigma factor that counteracts SpoIIAB and thus releases sigma F from inhibition. This chain is Anti-sigma F factor (spoIIAB), found in Bacillus subtilis (strain 168).